A 196-amino-acid polypeptide reads, in one-letter code: Calcineurin B homologous protein 2 (196 aa).

The N-myristoyl glycine moiety is linked to residue Gly2. 4 EF-hand domains span residues 26 to 61 (ASLL…AVNP), 71 to 106 (FPNG…PKQP), 111 to 146 (SRMN…MVGV), and 152 to 187 (QLES…MNIE). Position 27 is a phosphoserine (Ser27). Asp124, Asp126, Asp128, Lys130, and Glu135 together coordinate Ca(2+). The Nuclear export signal signature appears at 137–148 (LQVLRLMVGVQV). Positions 165, 167, 169, and 176 each coordinate Ca(2+).

This sequence belongs to the calcineurin regulatory subunit family. CHP subfamily. Interacts with PPP3CA. Interacts with SLC9A1/NHE1; the interaction occurs in a calcium-dependent manner. Interacts with SLC9A1/NHE1.

Its subcellular location is the cytoplasm. It localises to the nucleus. The protein resides in the cell membrane. Functionally, functions as an integral cofactor in cell pH regulation by controlling plasma membrane-type Na(+)/H(+) exchange activity. Binds to and activates SLC9A1/NHE1 in a serum-independent manner, thus increasing pH and protecting cells from serum deprivation-induced death. Also plays a role in the regulation of cell proliferation and tumor growth by increasing the phosphatase activity of PPP3CA in a calcium-dependent manner. Activator of the calcineurin/NFAT signaling pathway. Involved in the cytoplasmic translocation of the transcription factor NFATC3 to the nucleus. In Mus musculus (Mouse), this protein is Calcineurin B homologous protein 2 (Chp2).